Consider the following 204-residue polypeptide: Dephospho-CoA kinase (204 aa).

Residues 3 to 204 (VIGLTGGIGS…DRLDLAYRAH (202 aa)) enclose the DPCK domain. 11–16 (GSGKSY) contributes to the ATP binding site.

The protein belongs to the CoaE family.

It localises to the cytoplasm. The catalysed reaction is 3'-dephospho-CoA + ATP = ADP + CoA + H(+). The protein operates within cofactor biosynthesis; coenzyme A biosynthesis; CoA from (R)-pantothenate: step 5/5. Its function is as follows. Catalyzes the phosphorylation of the 3'-hydroxyl group of dephosphocoenzyme A to form coenzyme A. The polypeptide is Dephospho-CoA kinase (Ralstonia nicotianae (strain ATCC BAA-1114 / GMI1000) (Ralstonia solanacearum)).